The chain runs to 464 residues: Argininosuccinate lyase (464 aa).

Belongs to the lyase 1 family. Argininosuccinate lyase subfamily.

The protein resides in the cytoplasm. It catalyses the reaction 2-(N(omega)-L-arginino)succinate = fumarate + L-arginine. Its pathway is amino-acid biosynthesis; L-arginine biosynthesis; L-arginine from L-ornithine and carbamoyl phosphate: step 3/3. This chain is Argininosuccinate lyase, found in Pseudomonas syringae pv. syringae (strain B728a).